The following is a 444-amino-acid chain: Exodeoxyribonuclease 7 large subunit (444 aa).

The protein belongs to the XseA family. As to quaternary structure, heterooligomer composed of large and small subunits.

It localises to the cytoplasm. It catalyses the reaction Exonucleolytic cleavage in either 5'- to 3'- or 3'- to 5'-direction to yield nucleoside 5'-phosphates.. In terms of biological role, bidirectionally degrades single-stranded DNA into large acid-insoluble oligonucleotides, which are then degraded further into small acid-soluble oligonucleotides. The chain is Exodeoxyribonuclease 7 large subunit from Aliivibrio salmonicida (strain LFI1238) (Vibrio salmonicida (strain LFI1238)).